Reading from the N-terminus, the 255-residue chain is Leucyl/phenylalanyl-tRNA--protein transferase (255 aa).

The protein belongs to the L/F-transferase family.

The protein localises to the cytoplasm. It catalyses the reaction N-terminal L-lysyl-[protein] + L-leucyl-tRNA(Leu) = N-terminal L-leucyl-L-lysyl-[protein] + tRNA(Leu) + H(+). The catalysed reaction is N-terminal L-arginyl-[protein] + L-leucyl-tRNA(Leu) = N-terminal L-leucyl-L-arginyl-[protein] + tRNA(Leu) + H(+). The enzyme catalyses L-phenylalanyl-tRNA(Phe) + an N-terminal L-alpha-aminoacyl-[protein] = an N-terminal L-phenylalanyl-L-alpha-aminoacyl-[protein] + tRNA(Phe). Functions in the N-end rule pathway of protein degradation where it conjugates Leu, Phe and, less efficiently, Met from aminoacyl-tRNAs to the N-termini of proteins containing an N-terminal arginine or lysine. In Burkholderia thailandensis (strain ATCC 700388 / DSM 13276 / CCUG 48851 / CIP 106301 / E264), this protein is Leucyl/phenylalanyl-tRNA--protein transferase.